Reading from the N-terminus, the 556-residue chain is Peptidylarginine deiminase (556 aa).

Positions 1–23 (MKKLLQAKALILALGLFQLPAIA) are cleaved as a signal peptide. Residues 24–43 (QTQMQADRTNGQFATEEMQR) constitute a propeptide that is removed on maturation. The active-site Amidino-cysteine intermediate is the cysteine 351.

It belongs to the agmatine deiminase family. The cofactor is FAD. Requires FMN as cofactor.

Its subcellular location is the secreted. With respect to regulation, inhibited by cysteine and TLCK. Inhibited by high concentration of thiourea and thio-L-citrulline. Deiminates the guanidino group of C-terminal arginine residues on a variety of peptides, including the vasoregulatory peptide-hormone bradykinin, to yield ammonia and a citrulline residue. May promote the growth of the pathogen in the periodontal pocket by producing ammonia, ammonia having a protective effect during acidic cleaning cycles in the mouth. This is Peptidylarginine deiminase from Porphyromonas gingivalis (strain ATCC BAA-308 / W83).